Consider the following 121-residue polypeptide: Large ribosomal subunit protein bL12 (121 aa).

This sequence belongs to the bacterial ribosomal protein bL12 family. In terms of assembly, homodimer. Part of the ribosomal stalk of the 50S ribosomal subunit. Forms a multimeric L10(L12)X complex, where L10 forms an elongated spine to which 2 to 4 L12 dimers bind in a sequential fashion. Binds GTP-bound translation factors.

Forms part of the ribosomal stalk which helps the ribosome interact with GTP-bound translation factors. Is thus essential for accurate translation. The sequence is that of Large ribosomal subunit protein bL12 from Serratia proteamaculans (strain 568).